A 317-amino-acid chain; its full sequence is uncharacterized protein (317 aa).

The 58-residue stretch at 29–86 folds into the HTH lysR-type domain; that stretch reads IDLNLLTIFEAVYVHKGIVNAAKVLNLTPSAISQSIQKLRVIFPDPLFIRKGQGVTPT. The segment at residues 46-65 is a DNA-binding region (H-T-H motif); that stretch reads IVNAAKVLNLTPSAISQSIQ.

It belongs to the LysR transcriptional regulatory family.

This is an uncharacterized protein from Escherichia coli (strain K12).